The sequence spans 452 residues: GTPase Obg (452 aa).

In terms of domain architecture, Obg spans 1-158 (MFIDRAKIYV…KWIVLELKVM (158 aa)). 2 disordered regions span residues 66–87 (GKRGEHGQGSNQHGKSGQDKVI) and 117–143 (AEGGRGGRGNTRFANPKNKAPRFSEDG). The OBG-type G domain occupies 159 to 338 (AEVGLIGYPN…LLDFVAEKVA (180 aa)). Residues 165–172 (GYPNVGKS), 190–194 (FTTLN), 212–215 (DIPG), 282–285 (NKMD), and 319–321 (SAA) contribute to the GTP site. 2 residues coordinate Mg(2+): serine 172 and threonine 192. Residues 376 to 452 (IEEKPKSDFG…KIGNVEFEYQ (77 aa)) enclose the OCT domain.

Belongs to the TRAFAC class OBG-HflX-like GTPase superfamily. OBG GTPase family. In terms of assembly, monomer. Mg(2+) serves as cofactor.

The protein resides in the cytoplasm. An essential GTPase which binds GTP, GDP and possibly (p)ppGpp with moderate affinity, with high nucleotide exchange rates and a fairly low GTP hydrolysis rate. Plays a role in control of the cell cycle, stress response, ribosome biogenesis and in those bacteria that undergo differentiation, in morphogenesis control. This Natranaerobius thermophilus (strain ATCC BAA-1301 / DSM 18059 / JW/NM-WN-LF) protein is GTPase Obg.